Consider the following 445-residue polypeptide: Argininosuccinate synthase (445 aa).

ATP contacts are provided by residues 17–25 (AFSGGLDTS) and Ala-43. Tyr-99 serves as a coordination point for L-citrulline. ATP-binding residues include Gly-129 and Thr-131. Residues Thr-131, Asn-135, and Asp-136 each contribute to the L-aspartate site. An L-citrulline-binding site is contributed by Asn-135. Asp-136 contacts ATP. Residues Arg-139 and Ser-192 each contribute to the L-citrulline site. Residue Asp-194 participates in ATP binding. Residues Thr-201, Glu-203, and Glu-280 each contribute to the L-citrulline site.

Belongs to the argininosuccinate synthase family. Type 2 subfamily. As to quaternary structure, homotetramer.

It localises to the cytoplasm. The catalysed reaction is L-citrulline + L-aspartate + ATP = 2-(N(omega)-L-arginino)succinate + AMP + diphosphate + H(+). Its pathway is amino-acid biosynthesis; L-arginine biosynthesis; L-arginine from L-ornithine and carbamoyl phosphate: step 2/3. This chain is Argininosuccinate synthase, found in Burkholderia cenocepacia (strain ATCC BAA-245 / DSM 16553 / LMG 16656 / NCTC 13227 / J2315 / CF5610) (Burkholderia cepacia (strain J2315)).